A 251-amino-acid polypeptide reads, in one-letter code: Ditrans,polycis-undecaprenyl-diphosphate synthase ((2E,6E)-farnesyl-diphosphate specific) (251 aa).

Asp-29 is a catalytic residue. Asp-29 lines the Mg(2+) pocket. Residues 30–33 (GNGK), Trp-34, Arg-42, His-46, and 74–76 (SSD) contribute to the substrate site. The active-site Proton acceptor is the Asn-77. Substrate is bound by residues Trp-78, Arg-80, Arg-197, and 203–205 (RLS). Position 216 (Glu-216) interacts with Mg(2+).

It belongs to the UPP synthase family. Homodimer. Mg(2+) is required as a cofactor.

The enzyme catalyses 8 isopentenyl diphosphate + (2E,6E)-farnesyl diphosphate = di-trans,octa-cis-undecaprenyl diphosphate + 8 diphosphate. Its function is as follows. Catalyzes the sequential condensation of isopentenyl diphosphate (IPP) with (2E,6E)-farnesyl diphosphate (E,E-FPP) to yield (2Z,6Z,10Z,14Z,18Z,22Z,26Z,30Z,34E,38E)-undecaprenyl diphosphate (di-trans,octa-cis-UPP). UPP is the precursor of glycosyl carrier lipid in the biosynthesis of bacterial cell wall polysaccharide components such as peptidoglycan and lipopolysaccharide. The chain is Ditrans,polycis-undecaprenyl-diphosphate synthase ((2E,6E)-farnesyl-diphosphate specific) from Buchnera aphidicola subsp. Baizongia pistaciae (strain Bp).